The sequence spans 155 residues: Small ribosomal subunit protein uS7c (155 aa).

This sequence belongs to the universal ribosomal protein uS7 family. Part of the 30S ribosomal subunit.

The protein localises to the plastid. It localises to the chloroplast. In terms of biological role, one of the primary rRNA binding proteins, it binds directly to 16S rRNA where it nucleates assembly of the head domain of the 30S subunit. This is Small ribosomal subunit protein uS7c (rps7) from Schisandra chinensis (Chinese magnolia vine).